Consider the following 291-residue polypeptide: Pyridoxal 5'-phosphate synthase subunit PdxS (291 aa).

Residue Asp-23 participates in D-ribose 5-phosphate binding. Lys-80 (schiff-base intermediate with D-ribose 5-phosphate) is an active-site residue. A D-ribose 5-phosphate-binding site is contributed by Gly-152. Residue Arg-164 coordinates D-glyceraldehyde 3-phosphate. D-ribose 5-phosphate contacts are provided by residues Gly-213 and Gly-234–Ser-235.

It belongs to the PdxS/SNZ family. In the presence of PdxT, forms a dodecamer of heterodimers.

It carries out the reaction aldehydo-D-ribose 5-phosphate + D-glyceraldehyde 3-phosphate + L-glutamine = pyridoxal 5'-phosphate + L-glutamate + phosphate + 3 H2O + H(+). The protein operates within cofactor biosynthesis; pyridoxal 5'-phosphate biosynthesis. Catalyzes the formation of pyridoxal 5'-phosphate from ribose 5-phosphate (RBP), glyceraldehyde 3-phosphate (G3P) and ammonia. The ammonia is provided by the PdxT subunit. Can also use ribulose 5-phosphate and dihydroxyacetone phosphate as substrates, resulting from enzyme-catalyzed isomerization of RBP and G3P, respectively. The polypeptide is Pyridoxal 5'-phosphate synthase subunit PdxS (Bifidobacterium longum (strain DJO10A)).